The primary structure comprises 805 residues: Phosphoinositide 3-kinase adapter protein 1 (805 aa).

The 138-residue stretch at 8–145 (RGCDILIVYS…AVKKAISEDS (138 aa)) folds into the TIR domain. The tract at residues 10 to 144 (CDILIVYSPD…AAVKKAISED (135 aa)) is necessary and sufficient to mediate inhibition of NF-kappa-B downstream of activated TLRs; may mediate interaction with MYD88 and TIRAP. A disordered region spans residues 145–165 (SGCDSVTDTEPEDEKVVSYSK). The 137-residue stretch at 181–317 (VQPDRIRCGA…NIPASGLHLF (137 aa)) folds into the DBB domain. Residue tyrosine 263 is modified to Phosphotyrosine. Phosphotyrosine; by SYK occurs at positions 419, 444, and 459. The residue at position 513 (tyrosine 513) is a Phosphotyrosine; by ABL1. Residues 527 to 547 (ASRPPVPVPRPETTAPGAHQL) are disordered. Phosphotyrosine; by ABL1 is present on residues tyrosine 553 and tyrosine 570. A disordered region spans residues 571-590 (VSSESIRKGPPVRPWRDRPQ). At tyrosine 594 the chain carries Phosphotyrosine; by ABL1. Serine 642 carries the post-translational modification Phosphoserine. A coiled-coil region spans residues 645 to 667 (FQQENLKRLRDSITRRQREKQKS). Residues 654 to 672 (RDSITRRQREKQKSGKQTD) are compositionally biased toward basic and acidic residues. The disordered stretch occupies residues 654-679 (RDSITRRQREKQKSGKQTDLEITVPI). Phosphotyrosine; by ABL1 is present on tyrosine 694. The disordered stretch occupies residues 697–805 (GPRKSVIPPR…PPPPVPPRGR (109 aa)). Residues 707-716 (TELRRGDWKT) show a composition bias toward basic and acidic residues. The segment covering 717–740 (DSTSSTASSTSNRSSTRSLLSVSS) has biased composition (low complexity). A Phosphoserine modification is found at serine 718. Residues 795–805 (HPPPPVPPRGR) show a composition bias toward pro residues.

In terms of assembly, homooligomer. Interacts (phosphorylated on tyrosine residues within YXXM motifs) with PIK3R1 (via SH2 domain); required for BCR- and TLR-mediated activation of phosphoinositide 3-kinase. Interacts (via polyproline C-terminal region) with ABI1 (via SH3 domain); the interaction promotes phosphorylation of PIK3AP1 by ABL1. May interact with MYD88 and TIRAP. Constitutively phosphorylated. Phosphorylated on tyrosine residues in C-terminal region by ABL1. Phosphorylated on tyrosine residues within the YXXM motifs by BTK and SYK. Isoform 1 and isoform 2 are phosphorylated on tyrosine residues, most likely within the YXXM motifs, via CD19 activation. Toll-like receptor activation induces appearance of a phosphorylated form associated with membranes. In terms of tissue distribution, expressed in natural killer (NK) cells.

It is found in the cytoplasm. The protein resides in the cell membrane. In terms of biological role, signaling adapter that contributes to B-cell development by linking B-cell receptor (BCR) signaling to the phosphoinositide 3-kinase (PI3K)-Akt signaling pathway. Has a complementary role to the BCR coreceptor CD19, coupling BCR and PI3K activation by providing a docking site for the PI3K subunit PIK3R1. Alternatively, links Toll-like receptor (TLR) signaling to PI3K activation, a process preventing excessive inflammatory cytokine production. Also involved in the activation of PI3K in natural killer cells. May be involved in the survival of mature B-cells via activation of REL. This Homo sapiens (Human) protein is Phosphoinositide 3-kinase adapter protein 1 (PIK3AP1).